A 205-amino-acid chain; its full sequence is Ribosomal RNA small subunit methyltransferase G (205 aa).

Residues Gly-66, Phe-71, 119–120 (IE), and Arg-135 contribute to the S-adenosyl-L-methionine site.

Belongs to the methyltransferase superfamily. RNA methyltransferase RsmG family.

Its subcellular location is the cytoplasm. The catalysed reaction is guanosine(527) in 16S rRNA + S-adenosyl-L-methionine = N(7)-methylguanosine(527) in 16S rRNA + S-adenosyl-L-homocysteine. Specifically methylates the N7 position of guanine in position 527 of 16S rRNA. In Rhizobium johnstonii (strain DSM 114642 / LMG 32736 / 3841) (Rhizobium leguminosarum bv. viciae), this protein is Ribosomal RNA small subunit methyltransferase G.